Consider the following 459-residue polypeptide: Exodeoxyribonuclease 7 large subunit (459 aa).

Belongs to the XseA family. In terms of assembly, heterooligomer composed of large and small subunits.

It localises to the cytoplasm. It catalyses the reaction Exonucleolytic cleavage in either 5'- to 3'- or 3'- to 5'-direction to yield nucleoside 5'-phosphates.. In terms of biological role, bidirectionally degrades single-stranded DNA into large acid-insoluble oligonucleotides, which are then degraded further into small acid-soluble oligonucleotides. In Pseudomonas aeruginosa (strain LESB58), this protein is Exodeoxyribonuclease 7 large subunit.